The chain runs to 57 residues: Small ribosomal subunit protein bS21 (57 aa).

The segment at 34-57 is disordered; the sequence is RKEHYIKPSVQKKNRQKNMRSKKR. The segment covering 43–57 has biased composition (basic residues); that stretch reads VQKKNRQKNMRSKKR.

Belongs to the bacterial ribosomal protein bS21 family.

This is Small ribosomal subunit protein bS21 from Aster yellows witches'-broom phytoplasma (strain AYWB).